Reading from the N-terminus, the 427-residue chain is Histidine--tRNA ligase (427 aa).

Belongs to the class-II aminoacyl-tRNA synthetase family. As to quaternary structure, homodimer.

It localises to the cytoplasm. The enzyme catalyses tRNA(His) + L-histidine + ATP = L-histidyl-tRNA(His) + AMP + diphosphate + H(+). The chain is Histidine--tRNA ligase from Proteus mirabilis (strain HI4320).